We begin with the raw amino-acid sequence, 896 residues long: Probable sodium/sulfate cotransporter 3 (896 aa).

5 helical membrane-spanning segments follow: residues 1 to 21, 47 to 69, 106 to 126, 140 to 160, and 186 to 206; these read MAAIGWPGIVAIISVAISFII, IITVAKAAAGYGNTGLLTVIFLY, VMVLSAFLNNTPCVTFMIPIL, LLIPLSYAAVLGGTCTSIGTS, and MFDIAPYGVPYALMGFVFIIL. 4 consecutive RCK C-terminal domains span residues 212-296, 319-404, 408-493, and 499-586; these read LPGN…EFGL, TAFH…FKIN, LRFV…FPGL, and EQVD…KAFV. Helical transmembrane passes span 602–622, 626–646, 654–674, 685–705, 734–754, 776–796, and 804–824; these read MAIGVLLVVGMVLTQIVGGLK, YIHLWPAAVLTAALMLLTGCM, AIMWDVYLTIAAAFGVSAALE, AIISIGKSIGGDGPALIAIYV, LKIPAVDISVAIMLGASAGFI, FATIGAPFQIWLMVVASFILC, and VWIATWSITAFIVFVPALLTL. The tract at residues 857–881 is disordered; the sequence is RAQSFGGKAMSVGSTESRTDGSSTP. The segment covering 868-881 has biased composition (polar residues); the sequence is VGSTESRTDGSSTP.

The protein belongs to the divalent anion:Na+ symporter (DASS) superfamily. Na+/sulfate symporter (TC 2.A.47.4) family.

Its subcellular location is the cell membrane. Na(+)/sulfate cotransporter with a probable low-affinity for sulfate. In Chlamydomonas reinhardtii (Chlamydomonas smithii), this protein is Probable sodium/sulfate cotransporter 3 (SLT3).